Here is a 778-residue protein sequence, read N- to C-terminus: Glutathione biosynthesis bifunctional protein GshAB (778 aa).

The tract at residues 1–354 (MVNLDKGLLK…EEFFKNHDMV (354 aa)) is glutamate--cysteine ligase. Residues 521 to 777 (KDILRENNIR…AGEKILDLLF (257 aa)) enclose the ATP-grasp domain. 548-606 (RLFKDEKIVIKPKSTNFGLGISIFPGEYSREDYDKAVEIAFREDSSILIEEFMTGKEYR) serves as a coordination point for ATP. Mg(2+)-binding residues include Asp-728, Glu-747, and Asn-749. The Mn(2+) site is built by Asp-728, Glu-747, and Asn-749.

It in the N-terminal section; belongs to the glutamate--cysteine ligase type 1 family. Type 2 subfamily. In terms of assembly, monomer. It depends on Mg(2+) as a cofactor. Requires Mn(2+) as cofactor.

It catalyses the reaction L-cysteine + L-glutamate + ATP = gamma-L-glutamyl-L-cysteine + ADP + phosphate + H(+). The catalysed reaction is gamma-L-glutamyl-L-cysteine + glycine + ATP = glutathione + ADP + phosphate + H(+). It functions in the pathway sulfur metabolism; glutathione biosynthesis; glutathione from L-cysteine and L-glutamate: step 1/2. It participates in sulfur metabolism; glutathione biosynthesis; glutathione from L-cysteine and L-glutamate: step 2/2. In terms of biological role, synthesizes glutathione from L-glutamate and L-cysteine via gamma-L-glutamyl-L-cysteine. In Clostridium perfringens (strain 13 / Type A), this protein is Glutathione biosynthesis bifunctional protein GshAB.